The chain runs to 343 residues: Cathepsin Q (343 aa).

Positions 1 to 20 (MTPAVFLVILCLGVVPGASA) are cleaved as a signal peptide. Residues 21–124 (LDLSLDVQWQ…FPNSWNWRDA (104 aa)) constitute a propeptide, activation peptide. 2 cysteine pairs are disulfide-bonded: C146–C189 and C180–C222. C149 is an active-site residue. N-linked (GlcNAc...) asparagine glycosylation occurs at N228. C280 and C332 are oxidised to a cystine. H286 is a catalytic residue. N298 carries an N-linked (GlcNAc...) asparagine glycan. Residue N310 is part of the active site.

This sequence belongs to the peptidase C1 family. Highly expressed in placenta.

It is found in the lysosome. This chain is Cathepsin Q (Ctsq), found in Rattus norvegicus (Rat).